The following is a 22-amino-acid chain: Phospholipase A2 (22 aa).

It belongs to the phospholipase A2 family. Group II subfamily. Requires Ca(2+) as cofactor. Seven disulfide bonds are present. In terms of tissue distribution, expressed by the venom gland.

Its subcellular location is the secreted. It catalyses the reaction a 1,2-diacyl-sn-glycero-3-phosphocholine + H2O = a 1-acyl-sn-glycero-3-phosphocholine + a fatty acid + H(+). In terms of biological role, snake venom phospholipase A2 (PLA2) that inhibits neuromuscular transmission by blocking acetylcholine release from the nerve termini. PLA2 catalyzes the calcium-dependent hydrolysis of the 2-acyl groups in 3-sn-phosphoglycerides. In Daboia siamensis (Eastern Russel's viper), this protein is Phospholipase A2.